A 95-amino-acid polypeptide reads, in one-letter code: Co-chaperonin GroES (95 aa).

Belongs to the GroES chaperonin family. As to quaternary structure, heptamer of 7 subunits arranged in a ring. Interacts with the chaperonin GroEL.

It is found in the cytoplasm. Functionally, together with the chaperonin GroEL, plays an essential role in assisting protein folding. The GroEL-GroES system forms a nano-cage that allows encapsulation of the non-native substrate proteins and provides a physical environment optimized to promote and accelerate protein folding. GroES binds to the apical surface of the GroEL ring, thereby capping the opening of the GroEL channel. This chain is Co-chaperonin GroES, found in Stenotrophomonas maltophilia (strain K279a).